A 563-amino-acid chain; its full sequence is MDYKNLVAERIKENTELEVDLIEKLIEIPPKKEMGDYAFPCFQLAKTFRKAPNLIAEELKEKINKEGFEKVVTVGPYLNFFVDKTILIKDVLEKVLSEKEKYGSSKVGEGKNVVVEYSSPNIAKPFHIGHLFTTAIGNALYKILSFEGYNCIGINHLGDWGTQFGKLISAYRRWVDEEALEKDAIGELLRIYVKFHEEAEKDPELEKEARLNFKRLEEGSEEETELWNRFKDLSLKEFNKVYDMLGIKFDSLAGESFYSDKMDAVVQEIDDKGLLVDSNGAKVVMLDEYNMPPCMIKKSDGATIYATRDLAAAIYRKKTYDFHKCIYVVGTPQALHFKQVFTTLKLMGHDWADDCKHVGFGLVKLANKKLSTRNGDVVFLEDLLNQSVEETLKIINEKNPNLKNKEDVAKKLGIGAVVFTYLKNNRERDIVFDWKEILSFDGETGPYVEYSYARGKSILRKAGELTGEADYSKLSSKEEFELAKLLGGFNDAIMNAIDKLEPAIVTRYVIEVAKAFNKFYNAHGILNAEDNDVKLARVKLVEATCQVIKNALNLLGIDVVEEM.

The 'HIGH' region motif lies at 120–130 (PNIAKPFHIGH).

This sequence belongs to the class-I aminoacyl-tRNA synthetase family. As to quaternary structure, monomer.

The protein resides in the cytoplasm. The catalysed reaction is tRNA(Arg) + L-arginine + ATP = L-arginyl-tRNA(Arg) + AMP + diphosphate. This Clostridium botulinum (strain 657 / Type Ba4) protein is Arginine--tRNA ligase.